A 596-amino-acid polypeptide reads, in one-letter code: Probable protein S-acyltransferase 22 (596 aa).

2 helical membrane-spanning segments follow: residues 15–35 (VVAV…FAPF) and 44–64 (IAMG…IWCA). Residues 102-125 (TGGAKSHDGTCVEDTENGSNKKLE) are disordered. The region spanning 163 to 213 (FYCSLCEVEVFKYSKHCRVCDKCVDRFDHHCRWLNNCIGKRNYRKFFSLMV) is the DHHC domain. Residue Cys-193 is the S-palmitoyl cysteine intermediate of the active site. 2 consecutive transmembrane segments (helical) span residues 215–235 (AIFL…LCLL) and 254–274 (LIPF…ATLP). Disordered regions lie at residues 433 to 455 (SGRR…RRQS), 498 to 523 (QTSR…DSHD), and 549 to 596 (MGQQ…HKSR). Residues 498 to 518 (QTSRAMSGSGNVMVTSSPESS) show a composition bias toward polar residues. Over residues 549–571 (MGQQRGQQQQQQLSMMMMPLSRS) the composition is skewed to low complexity.

The protein belongs to the DHHC palmitoyltransferase family.

The protein localises to the cell membrane. Its subcellular location is the cytoplasmic vesicle membrane. It carries out the reaction L-cysteinyl-[protein] + hexadecanoyl-CoA = S-hexadecanoyl-L-cysteinyl-[protein] + CoA. In terms of biological role, palmitoyl acyltransferase. This Arabidopsis thaliana (Mouse-ear cress) protein is Probable protein S-acyltransferase 22 (PAT22).